The chain runs to 257 residues: UPF0259 membrane protein WIGBR3650 (257 aa).

6 consecutive transmembrane segments (helical) span residues 23–43, 89–109, 122–142, 148–168, 190–210, and 223–243; these read IIFF…IFLP, LSSL…INTI, IILS…ISFL, ALML…PILI, IKTV…ILVI, and VKIF…IYMY.

This sequence belongs to the UPF0259 family.

Its subcellular location is the cell membrane. The sequence is that of UPF0259 membrane protein WIGBR3650 from Wigglesworthia glossinidia brevipalpis.